The following is a 109-amino-acid chain: Thioredoxin (109 aa).

The 106-residue stretch at Ser2–Lys107 folds into the Thioredoxin domain. Residues Cys31 and Cys34 each act as nucleophile in the active site. A disulfide bridge connects residues Cys31 and Cys34.

It belongs to the thioredoxin family.

It is found in the plastid. The protein localises to the chloroplast. Its function is as follows. Participates in various redox reactions through the reversible oxidation of its active center dithiol to a disulfide and catalyzes dithiol-disulfide exchange reactions. This chain is Thioredoxin (trxA), found in Griffithsia pacifica (Red alga).